The primary structure comprises 1342 residues: DNA-directed RNA polymerase subunit beta (1342 aa).

The protein belongs to the RNA polymerase beta chain family. The RNAP catalytic core consists of 2 alpha, 1 beta, 1 beta' and 1 omega subunit. When a sigma factor is associated with the core the holoenzyme is formed, which can initiate transcription.

It catalyses the reaction RNA(n) + a ribonucleoside 5'-triphosphate = RNA(n+1) + diphosphate. DNA-dependent RNA polymerase catalyzes the transcription of DNA into RNA using the four ribonucleoside triphosphates as substrates. In Glaesserella parasuis serovar 5 (strain SH0165) (Haemophilus parasuis), this protein is DNA-directed RNA polymerase subunit beta.